The following is a 197-amino-acid chain: MVKIGVIGLQGDVSEHIEATKRALERLGIEGSVIWVKRPEQLNQIDGVIIPGGESTTISRLMQRTGLFDPLKKMIEDGLPAMGTCAGLIMLAKEVIGATPEQKFLEVLDVKVNRNAYGRQVDSFEAPVKLAFDDKPFIGVFIRAPRIVELLSDKVKPLAWLEDRVVGVEQGNVIGLEFHPELTDDTRIHEYFLKKIV.

Residue 53 to 55 coordinates L-glutamine; that stretch reads GES. The Nucleophile role is filled by C85. L-glutamine is bound by residues R114 and 142 to 143; that span reads IR. Catalysis depends on charge relay system residues H179 and E181.

This sequence belongs to the glutaminase PdxT/SNO family. As to quaternary structure, in the presence of PdxS, forms a dodecamer of heterodimers. Only shows activity in the heterodimer.

The catalysed reaction is aldehydo-D-ribose 5-phosphate + D-glyceraldehyde 3-phosphate + L-glutamine = pyridoxal 5'-phosphate + L-glutamate + phosphate + 3 H2O + H(+). It carries out the reaction L-glutamine + H2O = L-glutamate + NH4(+). The protein operates within cofactor biosynthesis; pyridoxal 5'-phosphate biosynthesis. In terms of biological role, catalyzes the hydrolysis of glutamine to glutamate and ammonia as part of the biosynthesis of pyridoxal 5'-phosphate. The resulting ammonia molecule is channeled to the active site of PdxS. In Pyrococcus furiosus (strain ATCC 43587 / DSM 3638 / JCM 8422 / Vc1), this protein is Pyridoxal 5'-phosphate synthase subunit PdxT.